The following is a 235-amino-acid chain: NifU-like protein 2, chloroplastic (235 aa).

The transit peptide at 1–16 (MQLLTLNPAAISRTPP) directs the protein to the chloroplast.

The protein belongs to the NifU family. Homodimer; disulfide-linked. [2Fe-2S] cluster is required as a cofactor. Predominantly expressed in leaves and floral stalks. Ubiquitous (at protein level).

It is found in the plastid. The protein resides in the chloroplast stroma. Functionally, molecular scaffold for [Fe-S] cluster assembly of chloroplastic iron-sulfur proteins. Required for biogenesis of ferredoxin, a major photosynthetic electron carrier containing [2Fe-2S] cluster. Required for the assembly of photosystem I complex. The protein is NifU-like protein 2, chloroplastic (NIFU2) of Arabidopsis thaliana (Mouse-ear cress).